We begin with the raw amino-acid sequence, 318 residues long: Nuclear egress protein 1 (318 aa).

A CCCH-type zinc finger spans residues 129–239 (CLRLSPFGHS…HLLLQGTSLH (111 aa)).

The protein belongs to the herpesviridae NEC1 protein family. Forms a heterodimeric viral nuclear egress complex (NEC) with NEC2. Interacts with capsid vertex specific component 2/CVC2; this interaction directs the capsid to the host inner nuclear membrane to initiate budding. In terms of processing, phosphorylated at serine residues in the N-terminus. This phosphorylation regulates the localization within the inner nuclear membrane.

The protein localises to the host nucleus inner membrane. Plays an essential role in virion nuclear egress, the first step of virion release from infected cell. Within the host nucleus, NEC1 interacts with the newly formed capsid through the vertexes and directs it to the inner nuclear membrane by associating with NEC2. Induces the budding of the capsid at the inner nuclear membrane as well as its envelopment into the perinuclear space. There, the NEC1/NEC2 complex promotes the fusion of the enveloped capsid with the outer nuclear membrane and the subsequent release of the viral capsid into the cytoplasm where it will reach the secondary budding sites in the host Golgi or trans-Golgi network. This Homo sapiens (Human) protein is Nuclear egress protein 1.